The primary structure comprises 240 residues: MTRSSSDRAIVVPAAQNALFTDSPFPTPESRLIAGVDEAGRGPLAGPVAVAAVVFDPAKPRINGLDDSKQLSAERREQLYARIVDRALAWSVVLIDSEEIDRINIYQATMLGMRRAVEGVAHVAGFARIDGNRVPKGLPCPAEALIGGDALDRAIMAASIVAKVTRDRLMRELHAQHPQYRFDLHKGYSTPAHLAALQTHGPCPQHRRSFAPVRRALGLETAQTAWDVPCAPADGLLLAE.

In terms of domain architecture, RNase H type-2 spans 31-222; it reads RLIAGVDEAG…VRRALGLETA (192 aa). A divalent metal cation contacts are provided by D37, E38, and D130.

Belongs to the RNase HII family. It depends on Mn(2+) as a cofactor. Mg(2+) is required as a cofactor.

It is found in the cytoplasm. The enzyme catalyses Endonucleolytic cleavage to 5'-phosphomonoester.. In terms of biological role, endonuclease that specifically degrades the RNA of RNA-DNA hybrids. The chain is Ribonuclease HII from Xanthomonas campestris pv. campestris (strain 8004).